Here is a 192-residue protein sequence, read N- to C-terminus: Glycerol-3-phosphate acyltransferase (192 aa).

The next 5 helical transmembrane spans lie at 1-21, 49-69, 80-100, 110-130, and 143-163; these read MFIA…AYIL, GLAG…IYSL, ELCI…WLKF, IGVI…SWLF, and IVSI…VVAL.

It belongs to the PlsY family. In terms of assembly, probably interacts with PlsX.

The protein localises to the cell inner membrane. The catalysed reaction is an acyl phosphate + sn-glycerol 3-phosphate = a 1-acyl-sn-glycero-3-phosphate + phosphate. It participates in lipid metabolism; phospholipid metabolism. Catalyzes the transfer of an acyl group from acyl-phosphate (acyl-PO(4)) to glycerol-3-phosphate (G3P) to form lysophosphatidic acid (LPA). This enzyme utilizes acyl-phosphate as fatty acyl donor, but not acyl-CoA or acyl-ACP. This is Glycerol-3-phosphate acyltransferase from Anaplasma phagocytophilum (strain HZ).